Consider the following 227-residue polypeptide: PKHD-type hydroxylase Patl_2273 (227 aa).

The region spanning 78–178 is the Fe2OG dioxygenase domain; it reads KIYPPKFNRY…RTASFFWIES (101 aa). Positions 96, 98, and 159 each coordinate Fe cation. R169 serves as a coordination point for 2-oxoglutarate.

It depends on Fe(2+) as a cofactor. The cofactor is L-ascorbate.

This is PKHD-type hydroxylase Patl_2273 from Pseudoalteromonas atlantica (strain T6c / ATCC BAA-1087).